Reading from the N-terminus, the 284-residue chain is Tryptophan 2,3-dioxygenase (284 aa).

Substrate contacts are provided by residues 53–57 (FIVQH), tyrosine 115, and arginine 119. Histidine 242 contacts heme. Residue threonine 256 coordinates substrate.

This sequence belongs to the tryptophan 2,3-dioxygenase family. In terms of assembly, homotetramer. Requires heme as cofactor.

It carries out the reaction L-tryptophan + O2 = N-formyl-L-kynurenine. It functions in the pathway amino-acid degradation; L-tryptophan degradation via kynurenine pathway; L-kynurenine from L-tryptophan: step 1/2. Its function is as follows. Heme-dependent dioxygenase that catalyzes the oxidative cleavage of the L-tryptophan (L-Trp) pyrrole ring and converts L-tryptophan to N-formyl-L-kynurenine. Catalyzes the oxidative cleavage of the indole moiety. In Bordetella parapertussis (strain 12822 / ATCC BAA-587 / NCTC 13253), this protein is Tryptophan 2,3-dioxygenase.